A 109-amino-acid polypeptide reads, in one-letter code: Phosphoribosyl-AMP cyclohydrolase (109 aa).

Asp76 provides a ligand contact to Mg(2+). Cys77 is a binding site for Zn(2+). Asp78 and Asp80 together coordinate Mg(2+). Zn(2+)-binding residues include Cys93 and Cys100.

The protein belongs to the PRA-CH family. Homodimer. The cofactor is Mg(2+). Zn(2+) serves as cofactor.

Its subcellular location is the cytoplasm. It carries out the reaction 1-(5-phospho-beta-D-ribosyl)-5'-AMP + H2O = 1-(5-phospho-beta-D-ribosyl)-5-[(5-phospho-beta-D-ribosylamino)methylideneamino]imidazole-4-carboxamide. It participates in amino-acid biosynthesis; L-histidine biosynthesis; L-histidine from 5-phospho-alpha-D-ribose 1-diphosphate: step 3/9. Functionally, catalyzes the hydrolysis of the adenine ring of phosphoribosyl-AMP. The protein is Phosphoribosyl-AMP cyclohydrolase of Streptococcus mutans serotype c (strain ATCC 700610 / UA159).